Reading from the N-terminus, the 300-residue chain is N-acetylmannosamine kinase (300 aa).

ATP-binding positions include 5 to 12 (ALDIGGTK) and 132 to 139 (GVGGGIVL). The Zn(2+) site is built by His156, Cys166, Cys168, and Cys173.

The protein belongs to the ROK (NagC/XylR) family. NanK subfamily. As to quaternary structure, homodimer.

It carries out the reaction an N-acyl-D-mannosamine + ATP = an N-acyl-D-mannosamine 6-phosphate + ADP + H(+). The protein operates within amino-sugar metabolism; N-acetylneuraminate degradation; D-fructose 6-phosphate from N-acetylneuraminate: step 2/5. Its function is as follows. Catalyzes the phosphorylation of N-acetylmannosamine (ManNAc) to ManNAc-6-P. This chain is N-acetylmannosamine kinase, found in Haemophilus influenzae (strain PittEE).